A 1483-amino-acid polypeptide reads, in one-letter code: Dynein axonemal assembly factor 1 homolog (1483 aa).

LRR repeat units follow at residues Arg34–Thr56, Glu57–Ser78, Lys79–Arg100, Glu101–Val122, Val125–Ile146, and Thr150–Glu171. An LRRCT domain is found at Pro185 to Trp223. Disordered regions lie at residues Ser249–Glu282, Glu300–Ser327, Asp945–Lys986, and Ser1167–Asp1213. Residues Asp311–Ser327 show a composition bias toward polar residues. Residues Thr1183–Gly1196 show a composition bias toward basic and acidic residues.

This sequence belongs to the DNAAF1 family.

The protein resides in the cell projection. It is found in the cilium. Functionally, cilium-specific protein required for cilia structures. This Drosophila melanogaster (Fruit fly) protein is Dynein axonemal assembly factor 1 homolog (dtr).